A 662-amino-acid chain; its full sequence is uncharacterized protein (662 aa).

This is an uncharacterized protein from Ictalurid herpesvirus 1 (strain Auburn) (IcHV-1).